A 271-amino-acid polypeptide reads, in one-letter code: Formamidopyrimidine-DNA glycosylase (271 aa).

The Schiff-base intermediate with DNA role is filled by Pro2. Residue Glu3 is the Proton donor of the active site. The active-site Proton donor; for beta-elimination activity is the Lys58. Positions 91, 110, and 152 each coordinate DNA. The segment at 237-271 adopts an FPG-type zinc-finger fold; it reads RAYGRGGQPCTVCQTELKEIKLGQRTSVFCPSCQR. Catalysis depends on Arg261, which acts as the Proton donor; for delta-elimination activity.

It belongs to the FPG family. As to quaternary structure, monomer. It depends on Zn(2+) as a cofactor.

The catalysed reaction is Hydrolysis of DNA containing ring-opened 7-methylguanine residues, releasing 2,6-diamino-4-hydroxy-5-(N-methyl)formamidopyrimidine.. The enzyme catalyses 2'-deoxyribonucleotide-(2'-deoxyribose 5'-phosphate)-2'-deoxyribonucleotide-DNA = a 3'-end 2'-deoxyribonucleotide-(2,3-dehydro-2,3-deoxyribose 5'-phosphate)-DNA + a 5'-end 5'-phospho-2'-deoxyribonucleoside-DNA + H(+). Involved in base excision repair of DNA damaged by oxidation or by mutagenic agents. Acts as a DNA glycosylase that recognizes and removes damaged bases. Has a preference for oxidized purines, such as 7,8-dihydro-8-oxoguanine (8-oxoG). Has AP (apurinic/apyrimidinic) lyase activity and introduces nicks in the DNA strand. Cleaves the DNA backbone by beta-delta elimination to generate a single-strand break at the site of the removed base with both 3'- and 5'-phosphates. This chain is Formamidopyrimidine-DNA glycosylase, found in Hahella chejuensis (strain KCTC 2396).